The chain runs to 1006 residues: Unconventional myosin-Id (1006 aa).

Position 2 is an N-acetylalanine (alanine 2). The 687-residue stretch at 9–695 folds into the Myosin motor domain; sequence FGKADFVLMD…TLFTLEELRA (687 aa). An ATP-binding site is contributed by 102-109; it reads GESGAGKT. Serine 200 is subject to Phosphoserine. At tyrosine 536 the chain carries Phosphotyrosine. The tract at residues 572-594 is actin-binding; sequence MIALVDNLASKEPYYVRCIKPND. IQ domains lie at 699-719 and 721-741; these read VRVV…MRYK and TKAA…SYIH. Positions 776 to 896 are interaction with calmodulin; sequence LQSIFNRWRA…MDPTKQYKVM (121 aa). The region spanning 812–1005 is the TH1 domain; it reads GQRADLGLQR…RSGFILSVPG (194 aa).

This sequence belongs to the TRAFAC class myosin-kinesin ATPase superfamily. Myosin family. In terms of assembly, interacts (via the two IQ motifs) with calmodulin. Binds an additional calmodulin chain via a third, C-terminal region. Interacts with F-actin. As to expression, detected on tracheal epithelial cells, and on epithelial cells and brush border cells in duodenum, jejunum and ileum. Detected on myelinated white matter in the cerebellum, and the myelinated part of the optic nerve. Detected on mature oligodendrocites. Detected on the outside of the myelin sheet that surrounds axons (at protein level). Ubiquitous. Highest levels in adult brain, and spinal cord. Moderate levels in lung, kidney, liver and spleen. Low levels in testis and heart (at protein level).

It localises to the cytoplasm. It is found in the perikaryon. The protein resides in the cell projection. Its subcellular location is the dendrite. The protein localises to the early endosome. It localises to the cell cortex. Unconventional myosin that functions as actin-based motor protein with ATPase activity. Plays a role in endosomal protein trafficking, and especially in the transfer of cargo proteins from early to recycling endosomes. Required for normal planar cell polarity in ciliated tracheal cells, for normal rotational polarity of cilia, and for coordinated, unidirectional ciliary movement in the trachea. Required for normal, polarized cilia organization in brain ependymal epithelial cells. This is Unconventional myosin-Id (Myo1d) from Rattus norvegicus (Rat).